The sequence spans 403 residues: Large ribosomal subunit protein uL3 (403 aa).

Residues 1-37 are disordered; that stretch reads MSHRKFSAPRHGSLGFLPRKRSSRHRGKVKSFPKDDP. A Phosphoserine modification is found at Ser-13. Residues 18-31 are compositionally biased toward basic residues; it reads PRKRSSRHRGKVKS. Lys-39 participates in a covalent cross-link: Glycyl lysine isopeptide (Lys-Gly) (interchain with G-Cter in SUMO2). N6-acetyllysine is present on Lys-136. Glycyl lysine isopeptide (Lys-Gly) (interchain with G-Cter in SUMO2) cross-links involve residues Lys-224 and Lys-226. His-245 is subject to Tele-methylhistidine. 2 positions are modified to N6-acetyllysine; alternate: Lys-286 and Lys-294. Residue Lys-286 forms a Glycyl lysine isopeptide (Lys-Gly) (interchain with G-Cter in SUMO2); alternate linkage. Residue Lys-294 forms a Glycyl lysine isopeptide (Lys-Gly) (interchain with G-Cter in SUMO1); alternate linkage. Phosphoserine is present on Ser-304. Residue Lys-366 is modified to N6-acetyllysine; alternate. Lys-366 is covalently cross-linked (Glycyl lysine isopeptide (Lys-Gly) (interchain with G-Cter in SUMO2); alternate). Position 373 is an N6-acetyllysine (Lys-373). Residues Lys-386, Lys-393, and Lys-399 each participate in a glycyl lysine isopeptide (Lys-Gly) (interchain with G-Cter in SUMO2) cross-link.

It belongs to the universal ribosomal protein uL3 family. Component of the large ribosomal subunit. Interacts with DHX33. Post-translationally, constitutively monomethylated at His-245 by METTL18. Methylation at His-245 regulates translation elongation by slowing ribosome traversal on tyrosine codons: slower elongation provides enough time for proper folding of synthesized proteins and prevents cellular aggregation of tyrosine-rich proteins It is not required for incorporation of RPL3 into ribosomes.

It is found in the nucleus. The protein localises to the nucleolus. It localises to the cytoplasm. Its function is as follows. Component of the large ribosomal subunit. The ribosome is a large ribonucleoprotein complex responsible for the synthesis of proteins in the cell. In Macaca fascicularis (Crab-eating macaque), this protein is Large ribosomal subunit protein uL3 (RPL3).